The primary structure comprises 135 residues: UPF0355 protein SAV0387 (135 aa).

This sequence belongs to the UPF0355 family.

This chain is UPF0355 protein SAV0387, found in Staphylococcus aureus (strain Mu50 / ATCC 700699).